The primary structure comprises 283 residues: Pantothenate synthetase (283 aa).

31 to 38 is a binding site for ATP; that stretch reads MGALHDGH. The Proton donor role is filled by H38. Q62 serves as a coordination point for (R)-pantoate. Q62 provides a ligand contact to beta-alanine. 148 to 151 lines the ATP pocket; the sequence is GKKD. Q154 is a binding site for (R)-pantoate. ATP-binding positions include V177 and 185–188; that span reads KSSR.

Belongs to the pantothenate synthetase family. Homodimer.

Its subcellular location is the cytoplasm. The catalysed reaction is (R)-pantoate + beta-alanine + ATP = (R)-pantothenate + AMP + diphosphate + H(+). The protein operates within cofactor biosynthesis; (R)-pantothenate biosynthesis; (R)-pantothenate from (R)-pantoate and beta-alanine: step 1/1. Functionally, catalyzes the condensation of pantoate with beta-alanine in an ATP-dependent reaction via a pantoyl-adenylate intermediate. The polypeptide is Pantothenate synthetase (Staphylococcus aureus (strain USA300)).